Reading from the N-terminus, the 266-residue chain is Undecaprenyl-diphosphatase (266 aa).

8 consecutive transmembrane segments (helical) span residues 1-21 (MMSW…TEFL), 43-63 (ASVF…VIYW), 81-101 (LYGI…GFLF), 107-127 (TLFT…FMLI), 145-165 (LTPK…WPGF), 183-203 (HLAA…ATGY), 219-239 (LFIT…KVFI), and 245-265 (ISLR…YLCI).

Belongs to the UppP family.

It localises to the cell membrane. The catalysed reaction is di-trans,octa-cis-undecaprenyl diphosphate + H2O = di-trans,octa-cis-undecaprenyl phosphate + phosphate + H(+). Functionally, catalyzes the dephosphorylation of undecaprenyl diphosphate (UPP). Confers resistance to bacitracin. The chain is Undecaprenyl-diphosphatase from Lawsonia intracellularis (strain PHE/MN1-00).